Consider the following 243-residue polypeptide: Carboxy-S-adenosyl-L-methionine synthase (243 aa).

Residues Tyr-40, 65-67, 90-91, 118-119, Asn-133, and Arg-200 each bind S-adenosyl-L-methionine; these read GCS, DN, and DI.

Belongs to the class I-like SAM-binding methyltransferase superfamily. Cx-SAM synthase family. Homodimer.

The catalysed reaction is prephenate + S-adenosyl-L-methionine = carboxy-S-adenosyl-L-methionine + 3-phenylpyruvate + H2O. Catalyzes the conversion of S-adenosyl-L-methionine (SAM) to carboxy-S-adenosyl-L-methionine (Cx-SAM). In Shewanella baltica (strain OS223), this protein is Carboxy-S-adenosyl-L-methionine synthase.